The primary structure comprises 494 residues: GTPase Der (494 aa).

EngA-type G domains lie at 3–166 (PVIA…MDAE) and 207–380 (IKLA…DCST). GTP-binding positions include 9–16 (GRPNVGKS), 56–60 (DTGGI), 118–121 (NKTD), 213–220 (GRPNVGKS), 260–264 (DTAGV), and 325–328 (NKWD). In terms of domain architecture, KH-like spans 381–465 (KRVGTSLLTR…PIRIQFKEGE (85 aa)).

It belongs to the TRAFAC class TrmE-Era-EngA-EngB-Septin-like GTPase superfamily. EngA (Der) GTPase family. In terms of assembly, associates with the 50S ribosomal subunit.

In terms of biological role, GTPase that plays an essential role in the late steps of ribosome biogenesis. This chain is GTPase Der, found in Yersinia enterocolitica serotype O:8 / biotype 1B (strain NCTC 13174 / 8081).